Here is a 502-residue protein sequence, read N- to C-terminus: Exodeoxyribonuclease 7 large subunit (502 aa).

Over residues 474-495 (SAPSTTKKSAPKPAAPKAPKTP) the composition is skewed to low complexity. The interval 474-502 (SAPSTTKKSAPKPAAPKAPKTPGEQGSLF) is disordered.

Belongs to the XseA family. As to quaternary structure, heterooligomer composed of large and small subunits.

It localises to the cytoplasm. It carries out the reaction Exonucleolytic cleavage in either 5'- to 3'- or 3'- to 5'-direction to yield nucleoside 5'-phosphates.. Its function is as follows. Bidirectionally degrades single-stranded DNA into large acid-insoluble oligonucleotides, which are then degraded further into small acid-soluble oligonucleotides. This chain is Exodeoxyribonuclease 7 large subunit, found in Ruegeria sp. (strain TM1040) (Silicibacter sp.).